A 253-amino-acid polypeptide reads, in one-letter code: Phosphoribosylaminoimidazole-succinocarboxamide synthase (253 aa).

This sequence belongs to the SAICAR synthetase family.

It catalyses the reaction 5-amino-1-(5-phospho-D-ribosyl)imidazole-4-carboxylate + L-aspartate + ATP = (2S)-2-[5-amino-1-(5-phospho-beta-D-ribosyl)imidazole-4-carboxamido]succinate + ADP + phosphate + 2 H(+). It participates in purine metabolism; IMP biosynthesis via de novo pathway; 5-amino-1-(5-phospho-D-ribosyl)imidazole-4-carboxamide from 5-amino-1-(5-phospho-D-ribosyl)imidazole-4-carboxylate: step 1/2. The chain is Phosphoribosylaminoimidazole-succinocarboxamide synthase from Parvibaculum lavamentivorans (strain DS-1 / DSM 13023 / NCIMB 13966).